Here is a 239-residue protein sequence, read N- to C-terminus: MDAVATAYLGGAVALIVGVAFVWLLYRSLDGSPHQSALAPLAIIPVFAGLSYVGMAYDIGTVIVNGNQIVGLRYIDWLVTTPILVGYVGYAAGASRRSIIGVMVADALMIAVGAGAVVTDGTLKWALFGVSSIFHLSLFAYLYVIFPRVVPDVPEQIGLFNLLKNHIGLLWLAYPLVWLFGPAGIGEATAAGVALTYVFLDVLAKVPYVYFFYARRRVFMHSESPPAPEQATVEATAAD.

Over 1–3 (MDA) the chain is Extracellular. A helical transmembrane segment spans residues 4–25 (VATAYLGGAVALIVGVAFVWLL). The Cytoplasmic portion of the chain corresponds to 26–34 (YRSLDGSPH). Residues 35-56 (QSALAPLAIIPVFAGLSYVGMA) traverse the membrane as a helical segment. Residues 57 to 70 (YDIGTVIVNGNQIV) lie on the Extracellular side of the membrane. A helical membrane pass occupies residues 71-92 (GLRYIDWLVTTPILVGYVGYAA). At 93 to 95 (GAS) the chain is on the cytoplasmic side. Residues 96–118 (RRSIIGVMVADALMIAVGAGAVV) traverse the membrane as a helical segment. At 119–122 (TDGT) the chain is on the extracellular side. A helical transmembrane segment spans residues 123–150 (LKWALFGVSSIFHLSLFAYLYVIFPRVV). Residues 151–153 (PDV) are Cytoplasmic-facing. The chain crosses the membrane as a helical span at residues 154 to 181 (PEQIGLFNLLKNHIGLLWLAYPLVWLFG). Over 182–189 (PAGIGEAT) the chain is Extracellular. Residues 190 to 222 (AAGVALTYVFLDVLAKVPYVYFFYARRRVFMHS) form a helical membrane-spanning segment. K205 is subject to N6-(retinylidene)lysine. Residues 223–239 (ESPPAPEQATVEATAAD) are Cytoplasmic-facing.

Belongs to the archaeal/bacterial/fungal opsin family. As to quaternary structure, interacts with HTR-I.

It localises to the cell membrane. Involved in the control of phototaxis. Mediates both photoattractant (in the orange light) and photophobic (in the near UV light) responses. The signal is then transmitted to the sensory rhodopsin I transducer (HTR-I). In Halobacterium salinarum (strain ATCC 29341 / DSM 671 / R1), this protein is Sensory rhodopsin-1 (sopI).